The primary structure comprises 392 residues: MQLRKLLLPGLLSVTLLSGCSLFSGEEDVVKMSPLPQVENQFTPTTVWSTSVGNGIGEFYSNLHPVMVDNVVYAADRAGVVKALNADDGKEIWSVNLGEKDGWFSRSSALLSGGVTVAGGHVYIGSEKAEVYALNTSDGTTAWQTKVAGEALSRPVVSDGIVLIHTSNGQLQALNQADGAIKWTVNLDMPSLSLRGESAPATAFGAAIVGGDNGRVSAVLMQQGQMIWQQRISQATGPTEIDRLSDVDTTPVVVNGVVYALAYNGNLTALDLRSGQIMWKRELGSVNDFIVDGDRIYLVDQNDRVLALTTDGGVTLWTQSDLLHRLLTSPVLYNGDLVVGDSEGYLHWINVDDGRFVAQQKVDSSGFLTEPTVADGKLLIQAKDGTVYAITR.

An N-terminal signal peptide occupies residues 1-19 (MQLRKLLLPGLLSVTLLSG). Cysteine 20 is lipidated: N-palmitoyl cysteine. Cysteine 20 is lipidated: S-diacylglycerol cysteine.

The protein belongs to the BamB family. Part of the Bam complex, which is composed of the outer membrane protein BamA, and four lipoproteins BamB, BamC, BamD and BamE.

The protein resides in the cell outer membrane. Its function is as follows. Part of the outer membrane protein assembly complex, which is involved in assembly and insertion of beta-barrel proteins into the outer membrane. The polypeptide is Outer membrane protein assembly factor BamB (Salmonella typhimurium (strain LT2 / SGSC1412 / ATCC 700720)).